Consider the following 561-residue polypeptide: Amidophosphoribosyltransferase 2, chloroplastic (561 aa).

The span at 1–27 (MAATSSISSSLSLNAKPNKLSNNNNNN) shows a compositional bias: low complexity. The interval 1-36 (MAATSSISSSLSLNAKPNKLSNNNNNNKPHRFLRNP) is disordered. Residues 1-53 (MAATSSISSSLSLNAKPNKLSNNNNNNKPHRFLRNPFLNPSSSSFSPLPASIS) constitute a chloroplast transit peptide. Residue C87 is the Nucleophile of the active site. The 221-residue stretch at 87–307 (CGVVGIYGDS…PGEVLVVDKD (221 aa)) folds into the Glutamine amidotransferase type-2 domain. [4Fe-4S] cluster-binding residues include C323, C469, C520, and C523.

In the C-terminal section; belongs to the purine/pyrimidine phosphoribosyltransferase family. Requires [4Fe-4S] cluster as cofactor. Mg(2+) serves as cofactor. Mostly expressed in leaves, and, to a lower extent, in cotyledons.

It localises to the plastid. It is found in the chloroplast stroma. It carries out the reaction 5-phospho-beta-D-ribosylamine + L-glutamate + diphosphate = 5-phospho-alpha-D-ribose 1-diphosphate + L-glutamine + H2O. It participates in purine metabolism; IMP biosynthesis via de novo pathway; N(1)-(5-phospho-D-ribosyl)glycinamide from 5-phospho-alpha-D-ribose 1-diphosphate: step 1/2. Inhibited by the phenyltriazole acetic acid compound [5-(4-chlorophenyl)-1-isopropyl-1H-[1,2,4]triazol-3-yl]-acetic acid (DAS734), a bleaching herbicide. In terms of biological role, catalyzes the first committed step of 'de novo purine biosynthesis from glutamine. Required for chloroplast biogenesis and cell division. Confers sensitivity to the phenyltriazole acetic acid compound [5-(4-chlorophenyl)-1-isopropyl-1H-[1,2,4]triazol-3-yl]-acetic acid (DAS734), a bleaching herbicide. The protein is Amidophosphoribosyltransferase 2, chloroplastic (ASE2) of Arabidopsis thaliana (Mouse-ear cress).